Consider the following 473-residue polypeptide: 3-isopropylmalate dehydratase large subunit (473 aa).

Positions 354, 414, and 417 each coordinate [4Fe-4S] cluster.

The protein belongs to the aconitase/IPM isomerase family. LeuC type 1 subfamily. In terms of assembly, heterodimer of LeuC and LeuD. Requires [4Fe-4S] cluster as cofactor.

It carries out the reaction (2R,3S)-3-isopropylmalate = (2S)-2-isopropylmalate. The protein operates within amino-acid biosynthesis; L-leucine biosynthesis; L-leucine from 3-methyl-2-oxobutanoate: step 2/4. Functionally, catalyzes the isomerization between 2-isopropylmalate and 3-isopropylmalate, via the formation of 2-isopropylmaleate. The chain is 3-isopropylmalate dehydratase large subunit from Mycobacterium bovis (strain ATCC BAA-935 / AF2122/97).